The primary structure comprises 390 residues: MRNWLLPEYIEDVLPRDAYRIEKIRRLVMDKLFVHGYQFVMPPLLEYVESLLAGSGSGMNLRMFKVVDQLSGRMMGLRADMTPQAARIDAHLLNTNGVTRLCYASSVVHTVPDEITRTREPFQVGAELYGHSGIESDLEIQRLLLECLSVSGIQSIHLDLGHIRVFRSLIYGSGIRPEFEMELYAALWAKDTSALRELVYTGLNDLDKTVREALLLLPELYGDETVLLRARKYLPNFPEIREALDQLEHVAKALEPYVDRIIFDLADLRGYHYHTGMVFAAYTQGSPVAIALGGRYDEIGKSFGRARPATGFSLDLKQLSRLTDINDYPRGILAPWKPQDDELAAMIKQLRIAGHIVVTELPGENSKEVARCDRNLVLRNGKWEICPVSG.

This sequence belongs to the class-II aminoacyl-tRNA synthetase family. HisZ subfamily. As to quaternary structure, heteromultimer composed of HisG and HisZ subunits.

It is found in the cytoplasm. Its pathway is amino-acid biosynthesis; L-histidine biosynthesis; L-histidine from 5-phospho-alpha-D-ribose 1-diphosphate: step 1/9. In terms of biological role, required for the first step of histidine biosynthesis. May allow the feedback regulation of ATP phosphoribosyltransferase activity by histidine. The polypeptide is ATP phosphoribosyltransferase regulatory subunit (Nitrosomonas eutropha (strain DSM 101675 / C91 / Nm57)).